The following is a 191-amino-acid chain: Decorin-binding protein A (191 aa).

Residues 1 to 29 (MIKCNNKTFNNLLKLTILVNLLISCGLTG) form the signal peptide.

It belongs to the decorin-binding protein family.

Functionally, binds to decorin which may mediate the adherence of B.burgdorferi to collagen fibers in skin and other tissues. This Borreliella burgdorferi (strain ATCC 35210 / DSM 4680 / CIP 102532 / B31) (Borrelia burgdorferi) protein is Decorin-binding protein A (dbpA).